The following is a 109-amino-acid chain: Nascent polypeptide-associated complex protein (109 aa).

In terms of domain architecture, NAC-A/B spans 3-70 (PMNPKQMKKM…YEVVKRPPKI (68 aa)).

It belongs to the NAC-alpha family. As to quaternary structure, homodimer. Interacts with the ribosome. Binds ribosomal RNA.

Contacts the emerging nascent chain on the ribosome. This is Nascent polypeptide-associated complex protein from Archaeoglobus fulgidus (strain ATCC 49558 / DSM 4304 / JCM 9628 / NBRC 100126 / VC-16).